Here is a 521-residue protein sequence, read N- to C-terminus: GMP synthase [glutamine-hydrolyzing] (521 aa).

In terms of domain architecture, Glutamine amidotransferase type-1 spans 8-203; it reads KILILDFGAQ…VVDICGCQTL (196 aa). The active-site Nucleophile is the C85. Catalysis depends on residues H177 and E179. The region spanning 204-396 is the GMPS ATP-PPase domain; it reads WTAANIIDDQ…LGLPRTMVYR (193 aa). Position 231–237 (231–237) interacts with ATP; that stretch reads SGGVDSS.

In terms of assembly, homodimer.

The catalysed reaction is XMP + L-glutamine + ATP + H2O = GMP + L-glutamate + AMP + diphosphate + 2 H(+). Its pathway is purine metabolism; GMP biosynthesis; GMP from XMP (L-Gln route): step 1/1. Its function is as follows. Catalyzes the synthesis of GMP from XMP. The polypeptide is GMP synthase [glutamine-hydrolyzing] (Xanthomonas oryzae pv. oryzae (strain MAFF 311018)).